Reading from the N-terminus, the 358-residue chain is Alanine racemase (358 aa).

Lys-34 functions as the Proton acceptor; specific for D-alanine in the catalytic mechanism. Lys-34 is subject to N6-(pyridoxal phosphate)lysine. Arg-129 serves as a coordination point for substrate. Tyr-254 (proton acceptor; specific for L-alanine) is an active-site residue. Met-302 lines the substrate pocket.

This sequence belongs to the alanine racemase family. Requires pyridoxal 5'-phosphate as cofactor.

The catalysed reaction is L-alanine = D-alanine. It participates in amino-acid biosynthesis; D-alanine biosynthesis; D-alanine from L-alanine: step 1/1. Its function is as follows. Catalyzes the interconversion of L-alanine and D-alanine. May also act on other amino acids. The sequence is that of Alanine racemase (alr) from Vibrio vulnificus (strain CMCP6).